The following is a 173-amino-acid chain: Photosystem I assembly protein Ycf3 (173 aa).

TPR repeat units lie at residues 35–68 (AYVY…EESP), 72–105 (SETL…NSNQ), and 120–153 (GRTA…YPGG).

Belongs to the Ycf3 family.

The protein localises to the cellular thylakoid membrane. In terms of biological role, essential for the assembly of the photosystem I (PSI) complex. May act as a chaperone-like factor to guide the assembly of the PSI subunits. The polypeptide is Photosystem I assembly protein Ycf3 (Prochlorococcus marinus (strain MIT 9303)).